The primary structure comprises 585 residues: Proline--tRNA ligase (585 aa).

It belongs to the class-II aminoacyl-tRNA synthetase family. ProS type 1 subfamily. Homodimer.

It is found in the cytoplasm. It carries out the reaction tRNA(Pro) + L-proline + ATP = L-prolyl-tRNA(Pro) + AMP + diphosphate. Catalyzes the attachment of proline to tRNA(Pro) in a two-step reaction: proline is first activated by ATP to form Pro-AMP and then transferred to the acceptor end of tRNA(Pro). As ProRS can inadvertently accommodate and process non-cognate amino acids such as alanine and cysteine, to avoid such errors it has two additional distinct editing activities against alanine. One activity is designated as 'pretransfer' editing and involves the tRNA(Pro)-independent hydrolysis of activated Ala-AMP. The other activity is designated 'posttransfer' editing and involves deacylation of mischarged Ala-tRNA(Pro). The misacylated Cys-tRNA(Pro) is not edited by ProRS. This chain is Proline--tRNA ligase, found in Nocardia farcinica (strain IFM 10152).